Consider the following 492-residue polypeptide: MDFWLYKQAQQNGHHIAITDGQESYTYQNLYCEASLLAKRLKAYQQSRVGLYIDNSIQSIILIHACWLANIEIAMINTRLTPNEMKNQMRSIDVQLIFCTLPLELRGFQIVLLDDIEFAGRDITMNGLLDNTMDIQYDTSNETVVPKDSPSNILNTSFNLDDIASIMFTSGTTGPQKAVPQTFRNHYASAIGCKESLGFDRDTNWLSVLPIYHISGLSVLLRAVIEGFTVRIVDKFNAEQILTMIKNERITHISLVPQTLNWLMQQGLHEPYDLQKILLGGAKLSATMIETALQYNLPIYNSFGMTETCSQFLTATPQMLHARPDTVGMPSANVDVKIKNPNKEGHGELMIKGANVMNGYLYPTDLTGTFENGYFNTGDIAEIDYEGYVMIYDRRKDLIISGGENIYPYQIETVAKQFPGISDAVCVGHPDDTWGQVPKLYFVSESDISKAQLIAYLSQHLAKYKIPKHFEKVDTLPYTSTGKLQRNKLYRG.

The protein belongs to the ATP-dependent AMP-binding enzyme family. MenE subfamily.

It catalyses the reaction 2-succinylbenzoate + ATP + CoA = 2-succinylbenzoyl-CoA + AMP + diphosphate. It participates in quinol/quinone metabolism; 1,4-dihydroxy-2-naphthoate biosynthesis; 1,4-dihydroxy-2-naphthoate from chorismate: step 5/7. Its pathway is quinol/quinone metabolism; menaquinone biosynthesis. Functionally, converts 2-succinylbenzoate (OSB) to 2-succinylbenzoyl-CoA (OSB-CoA). This Staphylococcus aureus (strain bovine RF122 / ET3-1) protein is 2-succinylbenzoate--CoA ligase.